The sequence spans 95 residues: Co-chaperonin GroES (95 aa).

It belongs to the GroES chaperonin family. Heptamer of 7 subunits arranged in a ring. Interacts with the chaperonin GroEL.

It is found in the cytoplasm. Its function is as follows. Together with the chaperonin GroEL, plays an essential role in assisting protein folding. The GroEL-GroES system forms a nano-cage that allows encapsulation of the non-native substrate proteins and provides a physical environment optimized to promote and accelerate protein folding. GroES binds to the apical surface of the GroEL ring, thereby capping the opening of the GroEL channel. This Chlorobium phaeovibrioides (strain DSM 265 / 1930) (Prosthecochloris vibrioformis (strain DSM 265)) protein is Co-chaperonin GroES.